The primary structure comprises 546 residues: T-complex protein 1 subunit zeta (546 aa).

Ser-2 carries the post-translational modification N-acetylserine. Residue Ser-249 is modified to Phosphoserine.

It belongs to the TCP-1 chaperonin family. In terms of assembly, heterooligomeric complex of about 850 to 900 kDa that forms two stacked rings, 12 to 16 nm in diameter.

The protein resides in the cytoplasm. Molecular chaperone; assists the folding of proteins upon ATP hydrolysis. Known to play a role, in vitro, in the folding of actin and tubulin. In yeast may play a role in mitotic spindle formation. This chain is T-complex protein 1 subunit zeta (CCT6), found in Saccharomyces cerevisiae (strain ATCC 204508 / S288c) (Baker's yeast).